Consider the following 207-residue polypeptide: Outer-membrane lipoprotein LolB (207 aa).

Positions M1–A21 are cleaved as a signal peptide. A lipid anchor (N-palmitoyl cysteine) is attached at C22. Residue C22 is the site of S-diacylglycerol cysteine attachment.

Belongs to the LolB family. As to quaternary structure, monomer.

It is found in the cell outer membrane. In terms of biological role, plays a critical role in the incorporation of lipoproteins in the outer membrane after they are released by the LolA protein. In Salmonella arizonae (strain ATCC BAA-731 / CDC346-86 / RSK2980), this protein is Outer-membrane lipoprotein LolB.